The sequence spans 288 residues: 2-hydroxy-6-oxononadienedioate/2-hydroxy-6-oxononatrienedioate hydrolase (288 aa).

The AB hydrolase-1 domain maps to leucine 39–histidine 274. Residue histidine 268 is the Proton acceptor of the active site.

It belongs to the AB hydrolase superfamily. MhpC family. In terms of assembly, homodimer.

The enzyme catalyses (2Z,4E)-2-hydroxy-6-oxonona-2,4-dienedioate + H2O = (2Z)-2-hydroxypenta-2,4-dienoate + succinate + H(+). It carries out the reaction (2Z,4E,7E)-2-hydroxy-6-oxonona-2,4,7-trienedioate + H2O = (2Z)-2-hydroxypenta-2,4-dienoate + fumarate + H(+). The protein operates within aromatic compound metabolism; 3-phenylpropanoate degradation. Catalyzes the cleavage of the C5-C6 bond of 2-hydroxy-6-oxononadienedioate and 2-hydroxy-6-oxononatrienedioate, a dienol ring fission product of the bacterial meta-cleavage pathway for degradation of phenylpropionic acid. This chain is 2-hydroxy-6-oxononadienedioate/2-hydroxy-6-oxononatrienedioate hydrolase, found in Paraburkholderia phymatum (strain DSM 17167 / CIP 108236 / LMG 21445 / STM815) (Burkholderia phymatum).